A 172-amino-acid chain; its full sequence is Shikimate kinase (172 aa).

Gly-11 to Thr-16 serves as a coordination point for ATP. A Mg(2+)-binding site is contributed by Ser-15. Residues Asp-33, Arg-57, and Gly-79 each coordinate substrate. Residue Arg-117 coordinates ATP. Arg-136 provides a ligand contact to substrate. Position 153 (Arg-153) interacts with ATP.

This sequence belongs to the shikimate kinase family. In terms of assembly, monomer. Mg(2+) serves as cofactor.

The protein localises to the cytoplasm. The enzyme catalyses shikimate + ATP = 3-phosphoshikimate + ADP + H(+). It participates in metabolic intermediate biosynthesis; chorismate biosynthesis; chorismate from D-erythrose 4-phosphate and phosphoenolpyruvate: step 5/7. Functionally, catalyzes the specific phosphorylation of the 3-hydroxyl group of shikimic acid using ATP as a cosubstrate. The sequence is that of Shikimate kinase from Pseudomonas entomophila (strain L48).